The chain runs to 410 residues: Digeranylgeranylglycerophospholipid reductase (410 aa).

FAD-binding residues include alanine 15, glutamate 34, valine 118, aspartate 286, glycine 298, and isoleucine 299. Positions 343 and 379 each coordinate a 2,3-bis-O-(geranylgeranyl)-sn-glycerol 1-phospholipid.

The protein belongs to the geranylgeranyl reductase family. DGGGPL reductase subfamily. The cofactor is FAD.

It carries out the reaction a 2,3-bis-O-phytanyl-sn-glycerol 1-phospholipid + 8 A = a 2,3-bis-O-(geranylgeranyl)-sn-glycerol 1-phospholipid + 8 AH2. The enzyme catalyses 2,3-bis-O-(phytanyl)-sn-glycerol 1-phosphate + 8 A = 2,3-bis-O-(geranylgeranyl)-sn-glycerol 1-phosphate + 8 AH2. The catalysed reaction is CDP-2,3-bis-O-(geranylgeranyl)-sn-glycerol + 8 AH2 = CDP-2,3-bis-O-(phytanyl)-sn-glycerol + 8 A. It catalyses the reaction archaetidylserine + 8 AH2 = 2,3-bis-O-phytanyl-sn-glycero-3-phospho-L-serine + 8 A. It participates in membrane lipid metabolism; glycerophospholipid metabolism. Functionally, is involved in the reduction of 2,3-digeranylgeranylglycerophospholipids (unsaturated archaeols) into 2,3-diphytanylglycerophospholipids (saturated archaeols) in the biosynthesis of archaeal membrane lipids. Can fully reduce the unsaturated isoprenoid side chains of membrane phospholipids and glycolipids. Is also able to reduce the omega-position isoprene of dolichol phosphate. This is Digeranylgeranylglycerophospholipid reductase from Haloferax volcanii (strain ATCC 29605 / DSM 3757 / JCM 8879 / NBRC 14742 / NCIMB 2012 / VKM B-1768 / DS2) (Halobacterium volcanii).